The sequence spans 407 residues: MAVGNVAVPETIYPIEGIKLSATAAGVRYKDRDDLVVIEIATDAATAVVTTKNAFCAAPVRVLREHFAKASPRYLVTNTGNANAGTGADGKRRAIDICAALAAKAGVNNNTVLPFSTGVIGEPLNSEAIIAGLDNALANLAPDNWLAAANGIRTTDTIPKLTSKKVNVAGSHYHITGMSKGSGMIRPNMATMLGYVATDANIAADLLQEMLSAINEQSFNRITVDGDTSTNDCCVLIATGAASSDIIDSPEHPHYQPLFDALAEVFIRLAQLIVRDGEGATKFMTVKVTGGKTTQECCDVAYAVAHSPLVKTAFFASDANWGRILAAVGYAGVEDLDTEQVDVYLDEVMICQNGGVAPTYTEEAGKTVMSRPEITIHIDLARGEAIDTVYTCDLSYDYVKINADYRS.

Substrate-binding residues include Thr-154, Lys-180, Thr-191, Glu-278, Asn-402, and Ser-407. The active-site Nucleophile is the Thr-191.

It belongs to the ArgJ family. In terms of assembly, heterotetramer of two alpha and two beta chains.

It localises to the cytoplasm. The catalysed reaction is N(2)-acetyl-L-ornithine + L-glutamate = N-acetyl-L-glutamate + L-ornithine. It carries out the reaction L-glutamate + acetyl-CoA = N-acetyl-L-glutamate + CoA + H(+). It participates in amino-acid biosynthesis; L-arginine biosynthesis; L-ornithine and N-acetyl-L-glutamate from L-glutamate and N(2)-acetyl-L-ornithine (cyclic): step 1/1. Its pathway is amino-acid biosynthesis; L-arginine biosynthesis; N(2)-acetyl-L-ornithine from L-glutamate: step 1/4. Functionally, catalyzes two activities which are involved in the cyclic version of arginine biosynthesis: the synthesis of N-acetylglutamate from glutamate and acetyl-CoA as the acetyl donor, and of ornithine by transacetylation between N(2)-acetylornithine and glutamate. The sequence is that of Arginine biosynthesis bifunctional protein ArgJ from Psychrobacter arcticus (strain DSM 17307 / VKM B-2377 / 273-4).